The chain runs to 498 residues: Histidine--tRNA ligase (498 aa).

This sequence belongs to the class-II aminoacyl-tRNA synthetase family. In terms of assembly, homodimer.

Its subcellular location is the cytoplasm. It carries out the reaction tRNA(His) + L-histidine + ATP = L-histidyl-tRNA(His) + AMP + diphosphate + H(+). This chain is Histidine--tRNA ligase, found in Bartonella quintana (strain Toulouse) (Rochalimaea quintana).